The primary structure comprises 154 residues: Myoglobin (154 aa).

One can recognise a Globin domain in the interval 2–148 (GLSDGEWQLV…FRNDIAAKYK (147 aa)). Serine 4 bears the Phosphoserine mark. Histidine 65 serves as a coordination point for nitrite. Histidine 65 serves as a coordination point for O2. The residue at position 68 (threonine 68) is a Phosphothreonine. Histidine 94 is a binding site for heme b.

It belongs to the globin family. Monomeric.

It localises to the cytoplasm. The protein resides in the sarcoplasm. It catalyses the reaction Fe(III)-heme b-[protein] + nitric oxide + H2O = Fe(II)-heme b-[protein] + nitrite + 2 H(+). The catalysed reaction is H2O2 + AH2 = A + 2 H2O. Monomeric heme protein which primary function is to store oxygen and facilitate its diffusion within muscle tissues. Reversibly binds oxygen through a pentacoordinated heme iron and enables its timely and efficient release as needed during periods of heightened demand. Depending on the oxidative conditions of tissues and cells, and in addition to its ability to bind oxygen, it also has a nitrite reductase activity whereby it regulates the production of bioactive nitric oxide. Under stress conditions, like hypoxia and anoxia, it also protects cells against reactive oxygen species thanks to its pseudoperoxidase activity. The chain is Myoglobin (MB) from Ondatra zibethicus (Muskrat).